Here is a 154-residue protein sequence, read N- to C-terminus: 6,7-dimethyl-8-ribityllumazine synthase (154 aa).

Residues phenylalanine 15, 47-49 (TFD), and 71-73 (AVI) contribute to the 5-amino-6-(D-ribitylamino)uracil site. Residue 76-77 (ET) coordinates (2S)-2-hydroxy-3-oxobutyl phosphate. The Proton donor role is filled by histidine 79. Residue leucine 104 coordinates 5-amino-6-(D-ribitylamino)uracil. Residue arginine 119 coordinates (2S)-2-hydroxy-3-oxobutyl phosphate.

It belongs to the DMRL synthase family.

It catalyses the reaction (2S)-2-hydroxy-3-oxobutyl phosphate + 5-amino-6-(D-ribitylamino)uracil = 6,7-dimethyl-8-(1-D-ribityl)lumazine + phosphate + 2 H2O + H(+). It functions in the pathway cofactor biosynthesis; riboflavin biosynthesis; riboflavin from 2-hydroxy-3-oxobutyl phosphate and 5-amino-6-(D-ribitylamino)uracil: step 1/2. Catalyzes the formation of 6,7-dimethyl-8-ribityllumazine by condensation of 5-amino-6-(D-ribitylamino)uracil with 3,4-dihydroxy-2-butanone 4-phosphate. This is the penultimate step in the biosynthesis of riboflavin. This is 6,7-dimethyl-8-ribityllumazine synthase from Saccharolobus islandicus (strain L.S.2.15 / Lassen #1) (Sulfolobus islandicus).